The primary structure comprises 36 residues: Ostricacin-1 (36 aa).

Cystine bridges form between Cys3/Cys29, Cys8/Cys23, and Cys13/Cys30.

It localises to the secreted. In terms of biological role, has antibacterial activity against the Gram-positive bacteria S.aureus 1056 MRSA (MIC=1.25 ug/ml) and S.aureus NCTC 4163 (MIC=6.7 ug/ml), and the Gram-negative bacteria E.coli O157:H7 (MIC=0.96 ug/ml) and E.coli 0111 (MIC=6.7 ug/ml). Does not have antifungal activity against the yeast C.albicans 3153A. This is Ostricacin-1 from Struthio camelus (Common ostrich).